We begin with the raw amino-acid sequence, 305 residues long: HPr kinase/phosphorylase (305 aa).

Catalysis depends on residues His138 and Lys159. 153–160 (GESGIGKS) contacts ATP. Position 160 (Ser160) interacts with Mg(2+). The active-site Proton acceptor; for phosphorylation activity. Proton donor; for dephosphorylation activity is the Asp177. The tract at residues 201–210 (IEIRGIGILD) is important for the catalytic mechanism of both phosphorylation and dephosphorylation. Mg(2+) is bound at residue Glu202. Residue Arg243 is part of the active site. Positions 264-269 (PVRPGR) are important for the catalytic mechanism of dephosphorylation.

Belongs to the HPrK/P family. In terms of assembly, homohexamer. Mg(2+) is required as a cofactor.

It carries out the reaction [HPr protein]-L-serine + ATP = [HPr protein]-O-phospho-L-serine + ADP + H(+). The catalysed reaction is [HPr protein]-O-phospho-L-serine + phosphate + H(+) = [HPr protein]-L-serine + diphosphate. Its function is as follows. Catalyzes the ATP- as well as the pyrophosphate-dependent phosphorylation of a specific serine residue in HPr, a phosphocarrier protein of the phosphoenolpyruvate-dependent sugar phosphotransferase system (PTS). HprK/P also catalyzes the pyrophosphate-producing, inorganic phosphate-dependent dephosphorylation (phosphorolysis) of seryl-phosphorylated HPr (P-Ser-HPr). The two antagonistic activities of HprK/P are regulated by several intracellular metabolites, which change their concentration in response to the absence or presence of rapidly metabolisable carbon sources (glucose, fructose, etc.) in the growth medium. Therefore, by controlling the phosphorylation state of HPr, HPrK/P is a sensor enzyme that plays a major role in the regulation of carbon metabolism and sugar transport: it mediates carbon catabolite repression (CCR), and regulates PTS-catalyzed carbohydrate uptake and inducer exclusion. This Caldanaerobacter subterraneus subsp. tengcongensis (strain DSM 15242 / JCM 11007 / NBRC 100824 / MB4) (Thermoanaerobacter tengcongensis) protein is HPr kinase/phosphorylase.